The sequence spans 129 residues: Chromatin accessibility complex protein 1 (129 aa).

Ala2 carries the N-acetylalanine modification. Residue Lys102 is modified to N6-acetyllysine. A coiled-coil region spans residues 104-120; it reads LKMLKEKREEEEDNEDD. Positions 109 to 129 are disordered; that stretch reads EKREEEEDNEDDGSDLGEALA. The segment covering 112–123 has biased composition (acidic residues); the sequence is EEEEDNEDDGSD. Ser122 carries the phosphoserine modification.

As to quaternary structure, heterodimer with POLE3; binds to DNA. Component of the CHRAC ISWI chromatin remodeling complex at least composed of SMARCA5/SNF2H, BAZ1A/ACF1, CHRAC1 and POLE3; the complex preferentially binds DNA through the CHRAC1-POLE3 heterodimer and possesses ATP-dependent nucleosome-remodeling activity. Within the complex, the heterodimer with POLE3 interacts with SMARCA5/SNF2H; the interaction is direct and enhances nucleosome sliding activity by the SMARCA5/SNF2H and BAZ1A/ACF1 interaction. Within the complex, the heterodimer with POLE3 interacts with BAZ1A/ACF1; the interactions are direct. Ubiquitously expressed.

It is found in the nucleus. Its function is as follows. Forms a complex with DNA polymerase epsilon subunit POLE3 and binds naked DNA, which is then incorporated into chromatin, aided by the nucleosome remodeling activity of ISWI/SNF2H and ACF1. Does not enhance nucleosome sliding activity of the ACF-5 ISWI chromatin remodeling complex. The protein is Chromatin accessibility complex protein 1 (Chrac1) of Mus musculus (Mouse).